The following is a 193-amino-acid chain: Bifunctional protein PyrR (193 aa).

Residues 57–58, arginine 98, 119–127, arginine 152, and valine 176 each bind substrate; these read TR and DDVLYSGRS. A PRPP-binding motif is present at residues 115 to 127; that stretch reads VILVDDVLYSGRS.

This sequence belongs to the purine/pyrimidine phosphoribosyltransferase family. PyrR subfamily.

It catalyses the reaction UMP + diphosphate = 5-phospho-alpha-D-ribose 1-diphosphate + uracil. In terms of biological role, regulates the transcription of the pyrimidine nucleotide (pyr) operon in response to exogenous pyrimidines. Its function is as follows. Also displays a weak uracil phosphoribosyltransferase activity which is not physiologically significant. The polypeptide is Bifunctional protein PyrR (Mycobacterium bovis (strain ATCC BAA-935 / AF2122/97)).